The primary structure comprises 416 residues: Tyrosine--tRNA ligase (416 aa).

Residue Y37 coordinates L-tyrosine. Residues 42–51 carry the 'HIGH' region motif; that stretch reads PTADSLHVGN. Y176 and Q180 together coordinate L-tyrosine. The 'KMSKS' region motif lies at 236–240; it reads KMGKS. An ATP-binding site is contributed by K239. The S4 RNA-binding domain occupies 350 to 416; that stretch reads LPAFRVFQEA…KKKHILLRPV (67 aa).

It belongs to the class-I aminoacyl-tRNA synthetase family. TyrS type 1 subfamily. Homodimer.

It is found in the cytoplasm. It carries out the reaction tRNA(Tyr) + L-tyrosine + ATP = L-tyrosyl-tRNA(Tyr) + AMP + diphosphate + H(+). Its function is as follows. Catalyzes the attachment of tyrosine to tRNA(Tyr) in a two-step reaction: tyrosine is first activated by ATP to form Tyr-AMP and then transferred to the acceptor end of tRNA(Tyr). This Gluconobacter oxydans (strain 621H) (Gluconobacter suboxydans) protein is Tyrosine--tRNA ligase.